The following is a 75-amino-acid chain: UPF0154 protein MYPU_1460 (75 aa).

Residues Gly8–Val28 form a helical membrane-spanning segment.

Belongs to the UPF0154 family.

Its subcellular location is the membrane. This Mycoplasmopsis pulmonis (strain UAB CTIP) (Mycoplasma pulmonis) protein is UPF0154 protein MYPU_1460.